A 303-amino-acid chain; its full sequence is Cyclin-dependent kinase 4 (303 aa).

At Ala2 the chain carries N-acetylalanine. The region spanning 6–295 is the Protein kinase domain; sequence YEPVAEIGVG…AFRALQHSYL (290 aa). ATP is bound by residues 12–20 and Lys35; that span reads IGVGAYGTV. The tract at residues 50–56 is required for binding D-type cyclins; the sequence is PISTVRE. Asp140 (proton acceptor) is an active-site residue. Thr172 carries the phosphothreonine; by CAK modification.

It belongs to the protein kinase superfamily. CMGC Ser/Thr protein kinase family. CDC2/CDKX subfamily. As to quaternary structure, component of the D-CDK4 complex, composed of CDK4 and some D-type G1 cyclin (CCND1, CCND2 or CCND3). Interacts directly in the complex with CCND1, CCND2 or CCND3. Interacts with SEI1 and ZNF655. Forms a ternary complex, cyclin D-CDK4-CDKN1B, involved in modulating CDK4 enzymatic activity. Interacts directly with CDKN1B (phosphorylated on 'Tyr-88' and 'Tyr-89'); the interaction allows assembly of the cyclin D-CDK4 complex, Thr-172 phosphorylation, nuclear translocation and enhances the cyclin D-CDK4 complex activity. CDK4 activity is either inhibited or enhanced depending on stoichiometry of complex. The non-tyrosine-phosphorylated form of CDKN1B prevents T-loop phosphorylation of CDK4 producing inactive CDK4. Interacts (unphosphorylated form) with CDK2. Also forms ternary complexes with CDKN1A or CDKN2A. Interacts directly with CDKN1A (via its N-terminal); the interaction promotes the assembly of the cyclin D-CDK4 complex, its nuclear translocation and promotes the cyclin D-dependent enzyme activity of CDK4. Interacts with CCND1; the interaction is prevented with the binding of CCND1 to INSM1 during cell cycle progression. Probably forms a complex composed of chaperones HSP90 and HSP70, co-chaperones CDC37, PPP5C, TSC1 and client protein TSC2, CDK4, AKT, RAF1 and NR3C1; this complex does not contain co-chaperones STIP1/HOP and PTGES3/p23. Interacts with CEBPA (when phosphorylated). Interacts with FNIP1 and FNIP2. In terms of processing, phosphorylation at Thr-172 is required for enzymatic activity. Phosphorylated, in vitro, at this site by CCNH-CDK7, but, in vivo, appears to be phosphorylated by a proline-directed kinase. In the cyclin D-CDK4-CDKN1B complex, this phosphorylation and consequent CDK4 enzyme activity, is dependent on the tyrosine phosphorylation state of CDKN1B. Thus, in proliferating cells, CDK4 within the complex is phosphorylated on Thr-172 in the T-loop. In resting cells, phosphorylation on Thr-172 is prevented by the non-tyrosine-phosphorylated form of CDKN1B.

It is found in the cytoplasm. Its subcellular location is the nucleus. The protein localises to the nucleus membrane. The catalysed reaction is L-seryl-[protein] + ATP = O-phospho-L-seryl-[protein] + ADP + H(+). It carries out the reaction L-threonyl-[protein] + ATP = O-phospho-L-threonyl-[protein] + ADP + H(+). With respect to regulation, both phosphorylation at Thr-172 and binding of a D-type cyclin are necessary for enzymatic activity. Full activation of the cyclin-D-CDK4 complex appears to require other factors such as recruitment of the substrate via a substrate recruitment motif, and/or formation of the CDKN1B ternary complex. Inhibited by INK4 family members. In resting cells, the non-tyrosine-phosphorylated form of CDKN1B prevents phosphorylation at Thr-172 and inactivation, while, in proliferating cells, tyrosine phosphorylation of CDKN1B allows phosphorylation of Thr-172 of CDK4 and subsequent activation. Ser/Thr-kinase component of cyclin D-CDK4 (DC) complexes that phosphorylate and inhibit members of the retinoblastoma (RB) protein family including RB1 and regulate the cell-cycle during G(1)/S transition. Phosphorylation of RB1 allows dissociation of the transcription factor E2F from the RB/E2F complexes and the subsequent transcription of E2F target genes which are responsible for the progression through the G(1) phase. Hypophosphorylates RB1 in early G(1) phase. Cyclin D-CDK4 complexes are major integrators of various mitogenenic and antimitogenic signals. Also phosphorylates SMAD3 in a cell-cycle-dependent manner and represses its transcriptional activity. Component of the ternary complex, cyclin D/CDK4/CDKN1B, required for nuclear translocation and activity of the cyclin D-CDK4 complex. This Sus scrofa (Pig) protein is Cyclin-dependent kinase 4 (CDK4).